Reading from the N-terminus, the 2263-residue chain is Collagen alpha-6(VI) chain (2263 aa).

The first 19 residues, 1–19 (MMLLILFLVIICSHISVNQ), serve as a signal peptide directing secretion. A nonhelical region region spans residues 20–1391 (DSGPEYADVV…TCCCLFCKCI (1372 aa)). 5 VWFA domains span residues 27–206 (DVVF…IKDV), 229–411 (DVVF…RNQI), 436–606 (DIYL…RNQV), 622–791 (DIMF…EDDL), and 809–982 (DVVF…FSDV). N-linked (GlcNAc...) asparagine glycans are attached at residues Asn198, Asn275, Asn288, Asn347, and Asn520. Asn930 and Asn988 each carry an N-linked (GlcNAc...) asparagine glycan. VWFA domains follow at residues 1000-1171 (DLVF…NKRI) and 1187-1371 (DVVV…GSRL). N-linked (GlcNAc...) asparagine glycosylation is present at Asn1290. Positions 1392 to 1725 (GGDGTMGDPG…GRKGVKGAKG (334 aa)) are triple-helical region. Residues 1397-1723 (MGDPGPPGKR…PPGRKGVKGA (327 aa)) are disordered. A compositionally biased stretch (basic and acidic residues) spans 1498-1508 (TPGDRGAKGLR). The short motif at 1508-1510 (RGD) is the Cell attachment site element. Residues 1547–1559 (SRRKTAAHGRRGH) show a composition bias toward basic residues. Positions 1680 to 1689 (GDPGGPGETG) are enriched in gly residues. A nonhelical region region spans residues 1726–2263 (LASFSTCELI…MIESAPKQHD (538 aa)). 2 consecutive VWFA domains span residues 1757-1937 (ELVF…ERLQ) and 1965-2166 (DAAF…INSI).

Belongs to the type VI collagen family. Trimers composed of three different chains: alpha-1(VI), alpha-2(VI), and alpha-3(VI) or alpha-5(VI) or alpha-6(VI). Post-translationally, prolines at the third position of the tripeptide repeating unit (G-X-Y) are hydroxylated in some or all of the chains.

It is found in the secreted. Its subcellular location is the extracellular space. It localises to the extracellular matrix. Collagen VI acts as a cell-binding protein. In Homo sapiens (Human), this protein is Collagen alpha-6(VI) chain (COL6A6).